Consider the following 460-residue polypeptide: Cysteine--tRNA ligase (460 aa).

Cys-29 lines the Zn(2+) pocket. The short motif at 31–41 is the 'HIGH' region element; that stretch reads ATPQSSPHIGH. Zn(2+)-binding residues include Cys-212, His-237, and Glu-241. A 'KMSKS' region motif is present at residues 268–272; the sequence is KMSKS. An ATP-binding site is contributed by Lys-271.

Belongs to the class-I aminoacyl-tRNA synthetase family. Monomer. Zn(2+) is required as a cofactor.

It is found in the cytoplasm. The catalysed reaction is tRNA(Cys) + L-cysteine + ATP = L-cysteinyl-tRNA(Cys) + AMP + diphosphate. The sequence is that of Cysteine--tRNA ligase from Corynebacterium glutamicum (strain R).